Here is a 544-residue protein sequence, read N- to C-terminus: Chaperonin GroEL (544 aa).

ATP-binding positions include 29–32, 86–90, glycine 413, 476–478, and aspartate 492; these read TLGP, DGTTT, and NAA.

It belongs to the chaperonin (HSP60) family. In terms of assembly, forms a cylinder of 14 subunits composed of two heptameric rings stacked back-to-back. Interacts with the co-chaperonin GroES.

The protein localises to the cytoplasm. It carries out the reaction ATP + H2O + a folded polypeptide = ADP + phosphate + an unfolded polypeptide.. Functionally, together with its co-chaperonin GroES, plays an essential role in assisting protein folding. The GroEL-GroES system forms a nano-cage that allows encapsulation of the non-native substrate proteins and provides a physical environment optimized to promote and accelerate protein folding. The chain is Chaperonin GroEL from Halalkalibacterium halodurans (strain ATCC BAA-125 / DSM 18197 / FERM 7344 / JCM 9153 / C-125) (Bacillus halodurans).